The sequence spans 353 residues: Feruloyl esterase B (353 aa).

The first 18 residues, 1–18 (MAIPLVLVLAWLLPVVLA), serve as a signal peptide directing secretion. Residues 19-291 (ASLTQVNNFG…VSVVLDWFGI (273 aa)) are catalytic. Catalysis depends on S136, which acts as the Charge relay system. N-linked (GlcNAc...) asparagine glycans are attached at residues N179 and N246. The CBM1 domain occupies 317-353 (CTAAHWAQCGGIGYSGCTACASPYTCQKANDYYSQCL).

This sequence belongs to the carbohydrate esterase 1 (CE1) family. Feruloyl esterase type B subfamily. Glycosylated.

It localises to the secreted. The enzyme catalyses feruloyl-polysaccharide + H2O = ferulate + polysaccharide.. Its activity is regulated as follows. Inhibited by the specific serine esterase inhibitor AEBSF. Involved in degradation of plant cell walls. Hydrolyzes the feruloyl-arabinose ester bond in arabinoxylans, and the feruloyl-galactose and feruloyl-arabinose ester bonds in pectin. Binds strongly to cellulose. The sequence is that of Feruloyl esterase B (FAEB) from Talaromyces funiculosus (Fruitlet core rot fungus).